Here is a 40-residue protein sequence, read N- to C-terminus: uncharacterized protein (40 aa).

Residues 20-37 (TYLYWTAVTAAYLTYLTI) form a helical membrane-spanning segment.

Its subcellular location is the membrane. This is an uncharacterized protein from Archaeoglobus fulgidus (strain ATCC 49558 / DSM 4304 / JCM 9628 / NBRC 100126 / VC-16).